Reading from the N-terminus, the 88-residue chain is UPF0250 protein PM1928 (88 aa).

It belongs to the UPF0250 family.

The sequence is that of UPF0250 protein PM1928 from Pasteurella multocida (strain Pm70).